A 574-amino-acid chain; its full sequence is K(+)/H(+) antiporter NhaP2 (574 aa).

Helical transmembrane passes span 6–26 (INSF…LSPM), 30–50 (LGIP…EDGL), 58–78 (YSTA…DGGM), 87–107 (VALW…TSIT), 109–129 (LMAA…GAIV), 173–193 (IAIL…VSFI), 196–216 (FGLG…LVNL), 219–239 (LAEG…YAVS), 242–262 (LGGS…NKPT), 271–291 (VLDG…GLLL), 299–319 (ILLP…PLAV), 335–355 (WFIS…VFPM), and 359–379 (LPGA…SLLI). Positions 405-486 (SGVEIYPSSE…LDALSHLFSQ (82 aa)) constitute an RCK C-terminal domain.

The protein belongs to the monovalent cation:proton antiporter 1 (CPA1) transporter (TC 2.A.36) family. NhaP2 subfamily.

The protein localises to the cell inner membrane. It catalyses the reaction K(+)(in) + H(+)(out) = K(+)(out) + H(+)(in). In terms of biological role, k(+)/H(+) antiporter that extrudes potassium in exchange for external protons and maintains the internal concentration of potassium under toxic levels. The protein is K(+)/H(+) antiporter NhaP2 of Shewanella sp. (strain W3-18-1).